The following is a 304-amino-acid chain: uncharacterized protein (304 aa).

A signal peptide spans 1 to 22 (MKKSLTLLILLLCSLLFSTVLS). The interval 91 to 111 (PAPAPTPESSDPDEPMKPDDS) is disordered. 4 N-linked (GlcNAc...) asparagine glycosylation sites follow: Asn133, Asn160, Asn183, and Asn233. Ser282 carries the GPI-anchor amidated serine lipid modification. The propeptide at 283–304 (SSHLFGVLPFLPLVLCIFLFLL) is removed in mature form.

It is found in the cell membrane. This is an uncharacterized protein from Arabidopsis thaliana (Mouse-ear cress).